The chain runs to 84 residues: Cell division topological specificity factor (84 aa).

The protein belongs to the MinE family.

Functionally, prevents the cell division inhibition by proteins MinC and MinD at internal division sites while permitting inhibition at polar sites. This ensures cell division at the proper site by restricting the formation of a division septum at the midpoint of the long axis of the cell. The polypeptide is Cell division topological specificity factor (Cupriavidus metallidurans (strain ATCC 43123 / DSM 2839 / NBRC 102507 / CH34) (Ralstonia metallidurans)).